Reading from the N-terminus, the 486-residue chain is 3-dehydroshikimate dehydratase (486 aa).

The catalysed reaction is 3-dehydroshikimate = 3,4-dihydroxybenzoate + H2O. It functions in the pathway aromatic compound metabolism; 3,4-dihydroxybenzoate biosynthesis; 3,4-dihydroxybenzoate from 3-dehydroquinate: step 2/2. Functionally, converts dehydroshikimate to protocatechuate. This chain is 3-dehydroshikimate dehydratase (quiC), found in Acinetobacter baylyi (strain ATCC 33305 / BD413 / ADP1).